The sequence spans 408 residues: LL-diaminopimelate aminotransferase (408 aa).

Y15 and G42 together coordinate substrate. Pyridoxal 5'-phosphate contacts are provided by residues Y72, 108 to 109 (SK), Y132, N187, Y218, and 246 to 248 (SFS). Residues K109, Y132, and N187 each coordinate substrate. N6-(pyridoxal phosphate)lysine is present on K249. Positions 257 and 292 each coordinate pyridoxal 5'-phosphate. Substrate contacts are provided by N292 and R388.

Belongs to the class-I pyridoxal-phosphate-dependent aminotransferase family. LL-diaminopimelate aminotransferase subfamily. As to quaternary structure, homodimer. Pyridoxal 5'-phosphate serves as cofactor.

It carries out the reaction (2S,6S)-2,6-diaminopimelate + 2-oxoglutarate = (S)-2,3,4,5-tetrahydrodipicolinate + L-glutamate + H2O + H(+). It functions in the pathway amino-acid biosynthesis; L-lysine biosynthesis via DAP pathway; LL-2,6-diaminopimelate from (S)-tetrahydrodipicolinate (aminotransferase route): step 1/1. Functionally, involved in the synthesis of meso-diaminopimelate (m-DAP or DL-DAP), required for both lysine and peptidoglycan biosynthesis. Catalyzes the direct conversion of tetrahydrodipicolinate to LL-diaminopimelate. The polypeptide is LL-diaminopimelate aminotransferase (Synechococcus sp. (strain CC9311)).